Consider the following 154-residue polypeptide: Myoglobin (154 aa).

The region spanning 2-148 (GLSDGEWQSV…FRNDIAAKYK (147 aa)) is the Globin domain. Phosphoserine is present on Ser-4. His-65 serves as a coordination point for nitrite. O2 is bound at residue His-65. Residue Thr-68 is modified to Phosphothreonine. His-94 contributes to the heme b binding site.

It belongs to the globin family. Monomeric.

It localises to the cytoplasm. It is found in the sarcoplasm. It carries out the reaction Fe(III)-heme b-[protein] + nitric oxide + H2O = Fe(II)-heme b-[protein] + nitrite + 2 H(+). The catalysed reaction is H2O2 + AH2 = A + 2 H2O. In terms of biological role, monomeric heme protein which primary function is to store oxygen and facilitate its diffusion within muscle tissues. Reversibly binds oxygen through a pentacoordinated heme iron and enables its timely and efficient release as needed during periods of heightened demand. Depending on the oxidative conditions of tissues and cells, and in addition to its ability to bind oxygen, it also has a nitrite reductase activity whereby it regulates the production of bioactive nitric oxide. Under stress conditions, like hypoxia and anoxia, it also protects cells against reactive oxygen species thanks to its pseudoperoxidase activity. The sequence is that of Myoglobin (MB) from Nycticebus coucang (Slow loris).